The primary structure comprises 76 residues: Small ribosomal subunit protein bS16c (76 aa).

The protein belongs to the bacterial ribosomal protein bS16 family.

The protein resides in the plastid. The protein localises to the chloroplast. In Guillardia theta (Cryptophyte), this protein is Small ribosomal subunit protein bS16c.